We begin with the raw amino-acid sequence, 166 residues long: Photosystem I assembly protein Ycf3 (166 aa).

3 TPR repeats span residues 35 to 68 (AFTY…EIDP), 72 to 105 (SYIL…NPSL), and 120 to 153 (GEQA…APTN).

This sequence belongs to the Ycf3 family.

It is found in the plastid. It localises to the chloroplast thylakoid membrane. In terms of biological role, essential for the assembly of the photosystem I (PSI) complex. May act as a chaperone-like factor to guide the assembly of the PSI subunits. The chain is Photosystem I assembly protein Ycf3 from Oltmannsiellopsis viridis (Marine flagellate).